The primary structure comprises 233 residues: MNNAPVIHCEKLSKTYVEGKLRVPVLHEVEFSVAPGERIAIVGASGAGKSTFLQLLGGLDKPSNGKIWVNGNDINQLSEREKGLLRNQHLGFVYQFHHLLPEFNALENVCIPLLVRGGIKPKHARQKASAYLEKVGLSHRQKHRVGELSGGEKQRVALARALVTEPCCVLADEPTGNLDQKTAEQVADLTLQLNRSLNISFVIVTHNREFADKMDRVLLLDKGQLQSESERNH.

An ABC transporter domain is found at 7-233 (IHCEKLSKTY…QLQSESERNH (227 aa)). An ATP-binding site is contributed by 43-50 (GASGAGKS).

It belongs to the ABC transporter superfamily. Lipoprotein translocase (TC 3.A.1.125) family. As to quaternary structure, the complex is composed of two ATP-binding proteins (LolD) and two transmembrane proteins (LolC and LolE).

It is found in the cell inner membrane. Functionally, part of the ABC transporter complex LolCDE involved in the translocation of mature outer membrane-directed lipoproteins, from the inner membrane to the periplasmic chaperone, LolA. Responsible for the formation of the LolA-lipoprotein complex in an ATP-dependent manner. The chain is Lipoprotein-releasing system ATP-binding protein LolD from Coxiella burnetii (strain RSA 493 / Nine Mile phase I).